Here is a 151-residue protein sequence, read N- to C-terminus: Histone H2A.2.2 (151 aa).

At methionine 1 the chain carries N-acetylmethionine. Positions 129-151 (EKAEKAGTKAKSPKKATKSPKKA) are disordered. Over residues 139-151 (KSPKKATKSPKKA) the composition is skewed to basic residues. Short sequence motifs (SPKK motif) lie at residues 140–143 (SPKK) and 147–150 (SPKK).

The protein belongs to the histone H2A family. As to quaternary structure, the nucleosome is a histone octamer containing two molecules each of H2A, H2B, H3 and H4 assembled in one H3-H4 heterotetramer and two H2A-H2B heterodimers. The octamer wraps approximately 147 bp of DNA. Phosphorylated within its C-terminal part, probably at the SPKK motifs.

It is found in the nucleus. Its subcellular location is the chromosome. Core component of nucleosome. Nucleosomes wrap and compact DNA into chromatin, limiting DNA accessibility to the cellular machineries which require DNA as a template. Histones thereby play a central role in transcription regulation, DNA repair, DNA replication and chromosomal stability. DNA accessibility is regulated via a complex set of post-translational modifications of histones, also called histone code, and nucleosome remodeling. This Triticum aestivum (Wheat) protein is Histone H2A.2.2.